A 540-amino-acid chain; its full sequence is Probable LRR receptor-like serine/threonine-protein kinase RPK1 (540 aa).

An N-terminal signal peptide occupies residues 1–19; sequence MKLLGLVFLLFNLFMFSFS. Residues 20 to 198 are Extracellular-facing; it reads RKLLTESGGG…PGKSGLYPIE (179 aa). 2 LRR repeats span residues 118 to 142 and 144 to 169; these read LSEIRVLSLSFNDLRGEIPKEIWGL and KLEILDLKGNNFIGGIRVVDNVVLRK. Residues 199–219 traverse the membrane as a helical segment; that stretch reads IASIVSASVIVFVLLVLVILF. The Cytoplasmic portion of the chain corresponds to 220–540; it reads IYTRKWKRNS…LLKRIQPSRL (321 aa). Residues T250 and T258 each carry the phosphothreonine modification. Residues 261–535 form the Protein kinase domain; the sequence is FSNSNCIGHG…KQAVRLLKRI (275 aa). ATP contacts are provided by residues 267–275 and K289; that span reads IGHGGFGST. 2 positions are modified to phosphotyrosine: Y334 and Y372. The active-site Proton acceptor is the D385. Residue Y427 is modified to Phosphotyrosine. Position 435 is a phosphothreonine (T435).

It belongs to the protein kinase superfamily. Ser/Thr protein kinase family. As to expression, expressed in roots, stems, leaves, and flowers.

It is found in the cell membrane. It carries out the reaction L-seryl-[protein] + ATP = O-phospho-L-seryl-[protein] + ADP + H(+). The enzyme catalyses L-threonyl-[protein] + ATP = O-phospho-L-threonyl-[protein] + ADP + H(+). Functionally, involved in the main abscisic acid-mediated (ABA) signaling pathway and in early ABA perception. Together with RPK2, required for pattern formation along the radial axis (e.g. the apical embryonic domain cell types that generate cotyledon primordia), and the apical-basal axis (e.g. differentiation of the basal pole during early embryogenesis). This is Probable LRR receptor-like serine/threonine-protein kinase RPK1 (RPK1) from Arabidopsis thaliana (Mouse-ear cress).